Reading from the N-terminus, the 351-residue chain is MNVKEHVISLPRRVFVGHDIIYDISIYFSQLGITSPFLIVTGTKYTKKIADKVIENLPKDAKYEVIEIDTATLDDVYKVEEVVKKVNPNILLGIGGGKVIDVTKYAAFRNNLEFVSIPTSPSHDGITSPFASIKGLQKPVSVKAKEPLAIIADIEILSLSPRRLINAGIGDTIGKIIAVRDWRLAAKLRGEYYGDYTASLALMSAKHAFQCTKIINKDIKYGVRMLIEALISSGVAMGMAGSTRPASGSEHLFAHAVELLHPEGVLHGELVGLGTIIMAYLHGINWKIIRDRLKKIGFPVKAKDLGLSDEEVIKALTIAHTIRPERYTILGDRGLTWSSAEKIARVTKIID.

Residues 97-101 and 119-122 each bind NAD(+); these read GKVID and TSPS. Asp124 serves as a coordination point for substrate. Residue Ser128 participates in NAD(+) binding. A substrate-binding site is contributed by Asp171. Zn(2+) contacts are provided by Asp171 and His251. His255 is a substrate binding site. His267 provides a ligand contact to Zn(2+).

Belongs to the glycerol-1-phosphate dehydrogenase family. Homodimer. It depends on Zn(2+) as a cofactor.

Its subcellular location is the cytoplasm. It carries out the reaction sn-glycerol 1-phosphate + NAD(+) = dihydroxyacetone phosphate + NADH + H(+). The catalysed reaction is sn-glycerol 1-phosphate + NADP(+) = dihydroxyacetone phosphate + NADPH + H(+). The protein operates within membrane lipid metabolism; glycerophospholipid metabolism. In terms of biological role, catalyzes the NAD(P)H-dependent reduction of dihydroxyacetonephosphate (DHAP or glycerone phosphate) to glycerol 1-phosphate (G1P). The G1P thus generated is used as the glycerophosphate backbone of phospholipids in the cellular membranes of Archaea. The sequence is that of Glycerol-1-phosphate dehydrogenase [NAD(P)+] from Saccharolobus islandicus (strain M.16.27) (Sulfolobus islandicus).